Here is a 157-residue protein sequence, read N- to C-terminus: Stalk-specific protein A (157 aa).

A signal peptide spans 1–19 (MRSILILLSLLLTIAFASA).

The protein resides in the secreted. The protein is Stalk-specific protein A (staA) of Dictyostelium discoideum (Social amoeba).